Here is a 734-residue protein sequence, read N- to C-terminus: Oligopeptide transporter 2 (734 aa).

14 consecutive transmembrane segments (helical) span residues 44–64 (MWFL…FFGY), 68–88 (PLMI…KLMA), 125–145 (GAGF…IMAF), 152–172 (FLAS…WAGI), 211–231 (FFVI…YLFL), 252–272 (LGSG…SVIA), 283–303 (FFAI…VIPI), 359–379 (FFAI…THVA), 414–434 (WWFY…CIFM), 442–462 (WWGL…VSII), 525–545 (MFLV…SVAW), 596–616 (YPAL…VWLL), 644–664 (ATSV…YFVF), and 677–697 (VLSA…YFSL).

It belongs to the oligopeptide OPT transporter (TC 2.A.67.1) family. In terms of tissue distribution, expressed in flowers, leaves, roots, and stems.

It is found in the membrane. Functionally, involved in the translocation of tetra- and pentapeptides across the cellular membrane in an energy-dependent manner. This is Oligopeptide transporter 2 (OPT2) from Arabidopsis thaliana (Mouse-ear cress).